The following is a 441-amino-acid chain: Protein disulfide isomerase-like 2-3 (441 aa).

The signal sequence occupies residues 1–18 (MRPAVAAALLLVAAAVAA). 2 Thioredoxin domains span residues 19–139 (SPVS…ALLR) and 159–276 (SEKT…ANAA). Catalysis depends on nucleophile residues Cys-59 and Cys-62. The cysteines at positions 59 and 62 are disulfide-linked. The tract at residues 143-166 (NGKTSAGSGGKKSGGSSEKTEPSA) is disordered. Catalysis depends on nucleophile residues Cys-195 and Cys-198. An intrachain disulfide couples Cys-195 to Cys-198.

The protein belongs to the protein disulfide isomerase family.

The protein localises to the endoplasmic reticulum lumen. The enzyme catalyses Catalyzes the rearrangement of -S-S- bonds in proteins.. Acts as a protein-folding catalyst that interacts with nascent polypeptides to catalyze the formation, isomerization, and reduction or oxidation of disulfide bonds. May play a role in storage protein biogenesis. This Oryza sativa subsp. japonica (Rice) protein is Protein disulfide isomerase-like 2-3 (PDIL2-3).